The primary structure comprises 67 residues: MPVKFSKVLIPQPRSKFIKVRCPDCGNEQVVFSHAAMVVRCLVCGRVLAEPTGGKARLAGHVVKILE.

C22, C25, C41, and C44 together coordinate Zn(2+). The segment at 22 to 44 (CPDCGNEQVVFSHAAMVVRCLVC) adopts a C4-type zinc-finger fold.

Belongs to the eukaryotic ribosomal protein eS27 family. As to quaternary structure, part of the 30S ribosomal subunit. Zn(2+) serves as cofactor.

The polypeptide is Small ribosomal subunit protein eS27 (Pyrobaculum islandicum (strain DSM 4184 / JCM 9189 / GEO3)).